The primary structure comprises 609 residues: MCGIVGAVAQRDIAEILIEGLRRLEYRGYDSAGLAVVDSEGHLTRLRRVGKVHALSDAAEKQDLHGGTGIAHTRWATHGEPSEANAHPHVSDYISVVHNGIIENHEPLRELLISRGYRFSSETDTEVIAHLVHWEQQQGGSLLEVVKRVIPQLRGAYGTVVMDSRDPSRLIAARSGSPLVIGCGVGENFIASDQLALLPVTRRFIFLEEGDVVEVTRRSISIFDKQGNAIERPEIESQVQYDAGDKGIYRHYMQKEIYEQPMAIKNTLEGRLSHGMIDLSELGPKADALLAEVQHIQIIACGTSYNSGMVSRYWFESLAGVPCDVEIASEFRYRKSAVRPNSLLITLSQSGETADTLAALRLSKELGYLGSLAICNVAGSSLVRESDLALMTKAGTEIGVASTKAFTTQLTVLLMLVGRIGKLKGADASLEHDIVHALQALPARIEQMLSLDKTIEALAEGFSDKHHALFLGRGDQYPIAMEGALKLKEISYIHAEAYAAGELKHGPLALIDADMPVIVVAPNNELLEKLKSNIEEVRARGGLLYVFADQDAGFTDSEGMKIIQLPHVEEIIAPIFYTVPLQLLSYHVALIKGTDVDQPRNLAKSVTVE.

C2 acts as the Nucleophile; for GATase activity in catalysis. Positions 2–218 (CGIVGAVAQR…EGDVVEVTRR (217 aa)) constitute a Glutamine amidotransferase type-2 domain. SIS domains are found at residues 286 to 426 (ADAL…LKGA) and 458 to 599 (LAEG…VDQP). K604 serves as the catalytic For Fru-6P isomerization activity.

As to quaternary structure, homodimer.

Its subcellular location is the cytoplasm. The catalysed reaction is D-fructose 6-phosphate + L-glutamine = D-glucosamine 6-phosphate + L-glutamate. Functionally, catalyzes the first step in hexosamine metabolism, converting fructose-6P into glucosamine-6P using glutamine as a nitrogen source. This Yersinia pestis protein is Glutamine--fructose-6-phosphate aminotransferase [isomerizing].